A 489-amino-acid chain; its full sequence is Rhamnulokinase (489 aa).

Position 13 to 17 (13 to 17 (ASSGR)) interacts with ATP. Cys-68 and Cys-222 are disulfide-bonded. Residues Gly-83 and 236–238 (HDT) each bind substrate. The active-site Proton acceptor is Asp-237. Position 259 (Thr-259) interacts with ATP. Residue Asn-296 coordinates substrate. ATP is bound at residue Gln-304. A disulfide bridge connects residues Cys-353 and Cys-370. Residue Gly-402 participates in ATP binding. Residues Cys-413 and Cys-417 are joined by a disulfide bond.

This sequence belongs to the rhamnulokinase family. It depends on Mg(2+) as a cofactor.

The enzyme catalyses L-rhamnulose + ATP = L-rhamnulose 1-phosphate + ADP + H(+). Its pathway is carbohydrate degradation; L-rhamnose degradation; glycerone phosphate from L-rhamnose: step 2/3. Its function is as follows. Involved in the catabolism of L-rhamnose (6-deoxy-L-mannose). Catalyzes the transfer of the gamma-phosphate group from ATP to the 1-hydroxyl group of L-rhamnulose to yield L-rhamnulose 1-phosphate. The protein is Rhamnulokinase of Salmonella typhi.